Consider the following 424-residue polypeptide: MCVSKKKLASKKIPTNNSSNNPLKNEIIENILENDFIKDITMEFNGISFPVYSEFERTYQQLFGDYKTKIRCQDYLFLIRHRKLYNGGLHKIQIANYIKNHFITRYDFDKISMTHLMCACIYSINDSNLELVKLLVNNFNFTKRDNTDHTALSYAFKNPGNIKIIGFLLNYIESDYFEIDQNIINDSLIYWSKTDYLPCIEMAKLLIKAEASINYKDRTGSTILINIINNKNYYNITDLVKFLLTEGVDIHESTTICPDNNVVKEKWTTSIGSKLIESVKFEINGEQIFPSYYGDYDESCRKPKYSIMNHLIKRYCWDNNKRIISMFYDYGYRELPNTTNTSILEFTKQIVNDIEFRESYFRKFKPDLIEKQREIVYKPGSVRSEIIKLNWEINSGQTLNPNKYIFDYFGINNLIELEKMINDV.

4 ANK repeats span residues 115–144 (HLMC…FTKR), 147–177 (TDHT…SDYF), 184–215 (INDS…SINY), and 219–252 (TGST…DIHE).

This is Putative ankyrin repeat protein R858 from Acanthamoeba polyphaga (Amoeba).